The primary structure comprises 440 residues: Ribulose bisphosphate carboxylase large chain (440 aa).

Lys-4 is modified (N6,N6,N6-trimethyllysine). Substrate is bound by residues Asn-113 and Thr-163. Lys-165 serves as the catalytic Proton acceptor. Substrate is bound at residue Lys-167. Residues Lys-191, Asp-193, and Glu-194 each coordinate Mg(2+). Lys-191 is subject to N6-carboxylysine. The active-site Proton acceptor is His-284. Residues Arg-285, His-317, and Ser-369 each contribute to the substrate site.

It belongs to the RuBisCO large chain family. Type I subfamily. Heterohexadecamer of 8 large chains and 8 small chains; disulfide-linked. The disulfide link is formed within the large subunit homodimers. Requires Mg(2+) as cofactor. In terms of processing, the disulfide bond which can form in the large chain dimeric partners within the hexadecamer appears to be associated with oxidative stress and protein turnover.

It localises to the plastid. Its subcellular location is the chloroplast. The catalysed reaction is 2 (2R)-3-phosphoglycerate + 2 H(+) = D-ribulose 1,5-bisphosphate + CO2 + H2O. It carries out the reaction D-ribulose 1,5-bisphosphate + O2 = 2-phosphoglycolate + (2R)-3-phosphoglycerate + 2 H(+). Its function is as follows. RuBisCO catalyzes two reactions: the carboxylation of D-ribulose 1,5-bisphosphate, the primary event in carbon dioxide fixation, as well as the oxidative fragmentation of the pentose substrate in the photorespiration process. Both reactions occur simultaneously and in competition at the same active site. This chain is Ribulose bisphosphate carboxylase large chain, found in Pteris vittata (Chinese ladder brake).